The primary structure comprises 627 residues: 1-deoxy-D-xylulose-5-phosphate synthase (627 aa).

Thiamine diphosphate-binding positions include His87 and 128-130; that span reads GHS. A Mg(2+)-binding site is contributed by Asp159. Thiamine diphosphate is bound by residues 160-161, Asn188, Phe295, and Glu375; that span reads GA. Asn188 lines the Mg(2+) pocket.

This sequence belongs to the transketolase family. DXPS subfamily. In terms of assembly, homodimer. Mg(2+) is required as a cofactor. Thiamine diphosphate serves as cofactor.

It catalyses the reaction D-glyceraldehyde 3-phosphate + pyruvate + H(+) = 1-deoxy-D-xylulose 5-phosphate + CO2. It functions in the pathway metabolic intermediate biosynthesis; 1-deoxy-D-xylulose 5-phosphate biosynthesis; 1-deoxy-D-xylulose 5-phosphate from D-glyceraldehyde 3-phosphate and pyruvate: step 1/1. In terms of biological role, catalyzes the acyloin condensation reaction between C atoms 2 and 3 of pyruvate and glyceraldehyde 3-phosphate to yield 1-deoxy-D-xylulose-5-phosphate (DXP). The polypeptide is 1-deoxy-D-xylulose-5-phosphate synthase (Pseudomonas aeruginosa (strain LESB58)).